The sequence spans 349 residues: Core protein VP7 (349 aa).

N-linked (GlcNAc...) asparagine; by host glycosylation is present at Asn-287.

Belongs to the orbivirus VP7 family. As to quaternary structure, homotrimer that assemble in a complex of 260 capsomers on an inner scaffold composed of VP3.

It localises to the virion. The VP7 protein is one of the five proteins (with VP1, VP3, VP4, and VP6) which form the inner capsid of the virus. The polypeptide is Core protein VP7 (Segment-7) (Antilocapra americana (Pronghorn)).